The sequence spans 353 residues: Bone morphogenetic protein 2 (353 aa).

Positions 1–239 are excised as a propeptide; the sequence is GSLKRPEDLL…GHPLHKREKR (239 aa). 3 N-linked (GlcNAc...) asparagine glycosylation sites follow: Asn-91, Asn-121, and Asn-157. Residues 228-248 are disordered; sequence GKGHPLHKREKRQAKHKQRKR. Basic residues predominate over residues 231–248; sequence HPLHKREKRQAKHKQRKR. 3 disulfide bridges follow: Cys-253–Cys-318, Cys-282–Cys-350, and Cys-286–Cys-352. A glycan (N-linked (GlcNAc...) asparagine) is linked at Asn-295.

It belongs to the TGF-beta family. Homodimer; disulfide-linked.

The protein localises to the secreted. In terms of biological role, negatively regulates the structure and function of the limb apical ectodermal ridge. This chain is Bone morphogenetic protein 2 (BMP2), found in Gallus gallus (Chicken).